The sequence spans 83 residues: Cytochrome b559 subunit alpha (83 aa).

Residues 22–36 (VIHAVTLPAIFLAGF) form a helical membrane-spanning segment. Residue H24 participates in heme binding.

This sequence belongs to the PsbE/PsbF family. Heterodimer of an alpha subunit and a beta subunit. PSII is composed of 1 copy each of membrane proteins PsbA, PsbB, PsbC, PsbD, PsbE, PsbF, PsbH, PsbI, PsbJ, PsbK, PsbL, PsbM, PsbT, PsbX, PsbY, PsbZ, Psb30/Ycf12, peripheral proteins PsbO, CyanoQ (PsbQ), PsbU, PsbV and a large number of cofactors. It forms dimeric complexes. Heme b serves as cofactor.

Its subcellular location is the cellular thylakoid membrane. Functionally, this b-type cytochrome is tightly associated with the reaction center of photosystem II (PSII). PSII is a light-driven water:plastoquinone oxidoreductase that uses light energy to abstract electrons from H(2)O, generating O(2) and a proton gradient subsequently used for ATP formation. It consists of a core antenna complex that captures photons, and an electron transfer chain that converts photonic excitation into a charge separation. This is Cytochrome b559 subunit alpha from Synechococcus sp. (strain RCC307).